A 180-amino-acid chain; its full sequence is ADP-ribosylation factor 5 (180 aa).

A lipid anchor (N-myristoyl glycine) is attached at Gly-2. GTP is bound by residues 24 to 31 (GLDAAGKT), 67 to 71 (DVGGQ), and 126 to 129 (NKQD).

Belongs to the small GTPase superfamily. Arf family.

The protein localises to the golgi apparatus. Its function is as follows. GTP-binding protein involved in protein trafficking; may modulate vesicle budding and uncoating within the Golgi apparatus. The polypeptide is ADP-ribosylation factor 5 (ARF5) (Gallus gallus (Chicken)).